A 534-amino-acid chain; its full sequence is Cytochrome P450 monooxygenase vrtK (534 aa).

Cysteine 448 serves as a coordination point for heme.

The protein belongs to the cytochrome P450 family. Heme serves as cofactor.

It functions in the pathway secondary metabolite biosynthesis; terpenoid biosynthesis. Cytochrome P450 monooxygenase; part of the gene cluster that mediates the biosynthesis of viridicatumtoxin, a tetracycline-like fungal meroterpenoid with a unique, fused spirobicyclic ring system. The first step of the pathway is the production of the malonamoyl-CoA starter unit for the polyketide synthase vrtA. The aldolase vrtJ may be involved in the synthesis of the malonamate substrate for malonamoyl-CoA synthetase vrtB. The polyketide synthase vrtA then may utilize the malonamoyl-CoA starter unit, followed by sequential condensation of eight malonyl-CoA units to form the polyketide backbone. The cyclization of the last ring could be mediated by the lactamase-like protein vrtG. The proposed post-PKS tailoring steps are a hydroxylation at C5 catalyzed the cytochrome P450 monooxygenase vrtE, a hydroxylation at C12a catalyzed by VrtH and/or VrtI, and an O-methylation by the O-methyltransferase vrtF. VrtC is then proposed to catalyze the transfer of a geranyl group synthesized by vrtD to the aromatic C ring of the tetracyclic polyketide intermediate of viridicatumtoxin to yield previridicatumtoxin. Finally, the cytochrome P450 monooxygenase vrtK catalyzes the spirocyclization of the geranyl moiety of previridicatumtoxin to afford viridicatumtoxin. This chain is Cytochrome P450 monooxygenase vrtK, found in Penicillium aethiopicum.